The chain runs to 429 residues: Adenylosuccinate synthetase (429 aa).

GTP is bound by residues 12–18 and 40–42; these read GDEGKGK and GHT. The Proton acceptor role is filled by Asp-13. 2 residues coordinate Mg(2+): Asp-13 and Gly-40. IMP is bound by residues 13-16, 38-41, Thr-129, Arg-143, Gln-223, Thr-238, and Arg-302; these read DEGK and NAGH. His-41 acts as the Proton donor in catalysis. Substrate is bound at residue 298-304; it reads TVTGRKR. Residues Arg-304, 330–332, and 412–414 contribute to the GTP site; these read KLD and STS.

This sequence belongs to the adenylosuccinate synthetase family. Homodimer. Mg(2+) serves as cofactor.

Its subcellular location is the cytoplasm. It carries out the reaction IMP + L-aspartate + GTP = N(6)-(1,2-dicarboxyethyl)-AMP + GDP + phosphate + 2 H(+). It functions in the pathway purine metabolism; AMP biosynthesis via de novo pathway; AMP from IMP: step 1/2. Plays an important role in the de novo pathway of purine nucleotide biosynthesis. Catalyzes the first committed step in the biosynthesis of AMP from IMP. This Rhizorhabdus wittichii (strain DSM 6014 / CCUG 31198 / JCM 15750 / NBRC 105917 / EY 4224 / RW1) (Sphingomonas wittichii) protein is Adenylosuccinate synthetase.